The sequence spans 199 residues: Superoxide dismutase [Fe] (199 aa).

Residues His-27, His-79, Asp-161, and His-165 each coordinate Fe cation.

This sequence belongs to the iron/manganese superoxide dismutase family. Homodimer. Fe cation serves as cofactor.

The enzyme catalyses 2 superoxide + 2 H(+) = H2O2 + O2. Its function is as follows. Destroys superoxide anion radicals which are normally produced within the cells and which are toxic to biological systems. This is Superoxide dismutase [Fe] (sodB) from Synechocystis sp. (strain ATCC 27184 / PCC 6803 / Kazusa).